Here is a 226-residue protein sequence, read N- to C-terminus: MNHFSKFSVTKRLLILEVLFSAISFGISIYIKVFGRSSIVTFFLLCFHLVPNALFLFPWTIITTSFVDANVFTLLSSILILSVYGVEIERSWGHKEYLLFCQFLTVIPNIAVLIPCFIAYKITDSHYLLVAIIQSTTAIQAGILTAWYQLYSCKKEESSNKFLCPLSKYLIYLFLSIHLFYVFQSFPWTYFCLAVSGTCISELYVLFVHPVVQELFHLESHTQLPI.

The signal sequence occupies residues 1 to 26 (MNHFSKFSVTKRLLILEVLFSAISFG). Residues 27–41 (ISIYIKVFGRSSIVT) lie on the Extracellular side of the membrane. Residues 42-62 (FFLLCFHLVPNALFLFPWTII) traverse the membrane as a helical segment. The Cytoplasmic portion of the chain corresponds to 63–65 (TTS). A helical transmembrane segment spans residues 66–86 (FVDANVFTLLSSILILSVYGV). The Extracellular segment spans residues 87-97 (EIERSWGHKEY). The chain crosses the membrane as a helical span at residues 98–118 (LLFCQFLTVIPNIAVLIPCFI). Residues 119–191 (AYKITDSHYL…VFQSFPWTYF (73 aa)) lie on the Cytoplasmic side of the membrane. The chain crosses the membrane as a helical span at residues 192 to 212 (CLAVSGTCISELYVLFVHPVV). The Extracellular portion of the chain corresponds to 213 to 226 (QELFHLESHTQLPI).

The protein resides in the membrane. This is Protein pdh1 (pdh1) from Schizosaccharomyces pombe (strain 972 / ATCC 24843) (Fission yeast).